The chain runs to 190 residues: dTTP/UTP pyrophosphatase (190 aa).

Residue D70 is the Proton acceptor of the active site.

The protein belongs to the Maf family. YhdE subfamily. A divalent metal cation serves as cofactor.

It localises to the cytoplasm. It carries out the reaction dTTP + H2O = dTMP + diphosphate + H(+). The enzyme catalyses UTP + H2O = UMP + diphosphate + H(+). In terms of biological role, nucleoside triphosphate pyrophosphatase that hydrolyzes dTTP and UTP. May have a dual role in cell division arrest and in preventing the incorporation of modified nucleotides into cellular nucleic acids. The sequence is that of dTTP/UTP pyrophosphatase from Paramagnetospirillum magneticum (strain ATCC 700264 / AMB-1) (Magnetospirillum magneticum).